Here is a 339-residue protein sequence, read N- to C-terminus: Glyceraldehyde-3-phosphate dehydrogenase (339 aa).

Residues 13 to 14 (RI), D35, and K84 contribute to the NAD(+) site. D-glyceraldehyde 3-phosphate contacts are provided by residues 156 to 158 (SCT), T187, 216 to 217 (TG), and R239. Catalysis depends on C157, which acts as the Nucleophile. NAD(+) is bound at residue N321.

This sequence belongs to the glyceraldehyde-3-phosphate dehydrogenase family. In terms of assembly, homotetramer.

The protein localises to the cytoplasm. It carries out the reaction D-glyceraldehyde 3-phosphate + phosphate + NAD(+) = (2R)-3-phospho-glyceroyl phosphate + NADH + H(+). The protein operates within carbohydrate degradation; glycolysis; pyruvate from D-glyceraldehyde 3-phosphate: step 1/5. This Brugia malayi (Filarial nematode worm) protein is Glyceraldehyde-3-phosphate dehydrogenase (G3PD).